The following is a 104-amino-acid chain: U20-lycotoxin-Ls1a (104 aa).

A signal peptide spans 1–30 (MFSTSDQVSKMNSRILSALLILGIATCVIA). The WAP domain occupies 31-76 (GGFCPKSRHPQCNLSYKINDCCAQSDCRVGSVCCVEGCGNVCRAES). 5 cysteine pairs are disulfide-bonded: Cys-34-Cys-64, Cys-42-Cys-68, Cys-51-Cys-63, Cys-52-Cys-90, and Cys-57-Cys-72.

Belongs to the venom protein 11 family. 02 (wap-2) subfamily. Contains 5 disulfide bonds. As to expression, expressed by the venom gland.

It localises to the secreted. Its function is as follows. Has antibacterial activity. This chain is U20-lycotoxin-Ls1a, found in Lycosa singoriensis (Wolf spider).